Consider the following 325-residue polypeptide: Methionine import ATP-binding protein MetN 3 (325 aa).

An ABC transporter domain is found at 2-239 (IEVQQLCKVY…PQSALGRALL (238 aa)). 36 to 43 (GRSGAGKS) lines the ATP pocket.

It belongs to the ABC transporter superfamily. Methionine importer (TC 3.A.1.24) family. The complex is composed of two ATP-binding proteins (MetN), two transmembrane proteins (MetI) and a solute-binding protein (MetQ).

The protein localises to the cell inner membrane. The enzyme catalyses L-methionine(out) + ATP + H2O = L-methionine(in) + ADP + phosphate + H(+). It catalyses the reaction D-methionine(out) + ATP + H2O = D-methionine(in) + ADP + phosphate + H(+). Functionally, part of the ABC transporter complex MetNIQ involved in methionine import. Responsible for energy coupling to the transport system. This Pseudomonas fluorescens (strain ATCC BAA-477 / NRRL B-23932 / Pf-5) protein is Methionine import ATP-binding protein MetN 3.